Reading from the N-terminus, the 120-residue chain is NAD(P)H-quinone oxidoreductase subunit 3, chloroplastic (120 aa).

The next 3 membrane-spanning stretches (helical) occupy residues 14–34 (LIIS…LAPI), 64–84 (MFAL…PWAM), and 88–108 (VLGV…IVGS).

Belongs to the complex I subunit 3 family. NDH is composed of at least 16 different subunits, 5 of which are encoded in the nucleus.

It is found in the plastid. The protein resides in the chloroplast thylakoid membrane. The catalysed reaction is a plastoquinone + NADH + (n+1) H(+)(in) = a plastoquinol + NAD(+) + n H(+)(out). It catalyses the reaction a plastoquinone + NADPH + (n+1) H(+)(in) = a plastoquinol + NADP(+) + n H(+)(out). Its function is as follows. NDH shuttles electrons from NAD(P)H:plastoquinone, via FMN and iron-sulfur (Fe-S) centers, to quinones in the photosynthetic chain and possibly in a chloroplast respiratory chain. The immediate electron acceptor for the enzyme in this species is believed to be plastoquinone. Couples the redox reaction to proton translocation, and thus conserves the redox energy in a proton gradient. The chain is NAD(P)H-quinone oxidoreductase subunit 3, chloroplastic from Cicer arietinum (Chickpea).